The following is a 192-amino-acid chain: MKNKVVVVTGVPGVGSTTSSQLAMDNLRKEGVNYKMVSFGSVMFEVAKEENLVSDRDQMRKMDPETQKRIQKMAGRKIAEMAKESPVAVDTHSTVSTPKGYLPGLPSWVLNELNPDLIIVVETTGDEILMRRMSDETRVRDLDTASTIEQHQFMNRCAAMSYGVLTGATVKIVQNRNGLLDQAVEELTNVLR.

10 to 18 (GVPGVGSTT) contacts ATP.

It belongs to the archaeal adenylate kinase family. In terms of assembly, monomer.

It is found in the cytoplasm. The catalysed reaction is AMP + ATP = 2 ADP. The protein is Adenylate kinase (adkA) of Methanococcus voltae.